A 126-amino-acid polypeptide reads, in one-letter code: Small ribosomal subunit protein uS12m (126 aa).

Polar residues predominate over residues 1–11 (MATSNQMGANT). The segment at 1-21 (MATSNQMGANTRSKKKKKNLK) is disordered. Basic residues predominate over residues 12–21 (RSKKKKKNLK).

This sequence belongs to the universal ribosomal protein uS12 family.

The protein localises to the mitochondrion. Its function is as follows. Protein S12 is involved in the translation initiation step. The sequence is that of Small ribosomal subunit protein uS12m (RPS12) from Bigelowiella natans (Pedinomonas minutissima).